A 444-amino-acid polypeptide reads, in one-letter code: Tol-Pal system protein TolB (444 aa).

The first 19 residues, 1–19 (MRNIIYFILSLLFSVTSYA), serve as a signal peptide directing secretion.

Belongs to the TolB family. As to quaternary structure, the Tol-Pal system is composed of five core proteins: the inner membrane proteins TolA, TolQ and TolR, the periplasmic protein TolB and the outer membrane protein Pal. They form a network linking the inner and outer membranes and the peptidoglycan layer.

The protein localises to the periplasm. Functionally, part of the Tol-Pal system, which plays a role in outer membrane invagination during cell division and is important for maintaining outer membrane integrity. In Rickettsia rickettsii (strain Sheila Smith), this protein is Tol-Pal system protein TolB.